The sequence spans 189 residues: GMP synthase [glutamine-hydrolyzing] subunit A (189 aa).

Residues 1 to 189 (MIVILNNGGQ…CKKCGFEFEE (189 aa)) enclose the Glutamine amidotransferase type-1 domain. The active-site Nucleophile is the cysteine 76. Active-site residues include histidine 163 and glutamate 165.

In terms of assembly, heterodimer composed of a glutamine amidotransferase subunit (A) and a GMP-binding subunit (B).

The enzyme catalyses XMP + L-glutamine + ATP + H2O = GMP + L-glutamate + AMP + diphosphate + 2 H(+). It participates in purine metabolism; GMP biosynthesis; GMP from XMP (L-Gln route): step 1/1. Its function is as follows. Catalyzes the synthesis of GMP from XMP. The chain is GMP synthase [glutamine-hydrolyzing] subunit A from Methanococcus maripaludis (strain C6 / ATCC BAA-1332).